Consider the following 245-residue polypeptide: Eukaryotic translation initiation factor 3 subunit K (245 aa).

The PCI domain maps to 46–227 (YDCYANLALL…EAKGTVVREN (182 aa)).

The protein belongs to the eIF-3 subunit K family. In terms of assembly, component of the eukaryotic translation initiation factor 3 (eIF-3) complex.

It is found in the cytoplasm. Component of the eukaryotic translation initiation factor 3 (eIF-3) complex, which is involved in protein synthesis of a specialized repertoire of mRNAs and, together with other initiation factors, stimulates binding of mRNA and methionyl-tRNAi to the 40S ribosome. The eIF-3 complex specifically targets and initiates translation of a subset of mRNAs involved in cell proliferation. The protein is Eukaryotic translation initiation factor 3 subunit K of Botryotinia fuckeliana (strain B05.10) (Noble rot fungus).